Consider the following 399-residue polypeptide: Telomeric repeat-binding factor 2-interacting protein 1 (399 aa).

Ala2 is subject to N-acetylalanine. Phosphoserine is present on residues Ser36 and Ser43. The BRCT domain occupies 78–101 (FISTQYILDCVERNERLELEAYRL). The tract at residues 104 to 132 (ASAADTGSEAKPGALAEGAAEPEPQRHAG) is disordered. The span at 112 to 125 (EAKPGALAEGAAEP) shows a compositional bias: low complexity. A Glycyl lysine isopeptide (Lys-Gly) (interchain with G-Cter in SUMO2) cross-link involves residue Lys114. The 61-residue stretch at 128-188 (QRHAGRIAFT…SLKDRYLKHL (61 aa)) folds into the Myb-like domain. Residues Ser154 and Ser156 each carry the phosphoserine modification. Lys194 is covalently cross-linked (Glycyl lysine isopeptide (Lys-Gly) (interchain with G-Cter in SUMO2)). Disordered regions lie at residues 196–244 (LLGD…EEIQ) and 264–311 (VVVD…QPEV). Residues Ser203 and Ser206 each carry the phosphoserine modification. Residues Lys208, Lys212, and Lys240 each participate in a glycyl lysine isopeptide (Lys-Gly) (interchain with G-Cter in SUMO2) cross-link. Positions 280–304 (CDDDPPTPEEDSETQPDEEEEEEEE) are enriched in acidic residues. Lys372 participates in a covalent cross-link: Glycyl lysine isopeptide (Lys-Gly) (interchain with G-Cter in SUMO2). The Nuclear localization signal signature appears at 383–399 (KKFGAQNVARRIEFRKK).

Belongs to the RAP1 family. In terms of assembly, associates with the I-kappa-B-kinase (IKK) core complex, composed of CHUK, IKBKB and IKBKG. Homodimer. Component of the shelterin complex (telosome) composed of TERF1, TERF2, TINF2, TERF2IP ACD and POT1. Interacts with TERF2; the interaction is direct. Does not interact with TERF1. Interacts with SLX4/BTBD12. Ubiquitous. Highly expressed.

The protein localises to the nucleus. The protein resides in the cytoplasm. Its subcellular location is the chromosome. It localises to the telomere. In terms of biological role, acts both as a regulator of telomere function and as a transcription regulator. Involved in the regulation of telomere length and protection as a component of the shelterin complex (telosome). In contrast to other components of the shelterin complex, it is dispensible for telomere capping and does not participate in the protection of telomeres against non-homologous end-joining (NHEJ)-mediated repair. Instead, it is required to negatively regulate telomere recombination and is essential for repressing homology-directed repair (HDR), which can affect telomere length. Does not bind DNA directly: recruited to telomeric double-stranded 5'-TTAGGG-3' repeats via its interaction with TERF2. Independently of its function in telomeres, also acts as a transcription regulator: recruited to extratelomeric 5'-TTAGGG-3' sites via its association with TERF2 or other factors, and regulates gene expression. When cytoplasmic, associates with the I-kappa-B-kinase (IKK) complex and acts as a regulator of the NF-kappa-B signaling by promoting IKK-mediated phosphorylation of RELA/p65, leading to activate expression of NF-kappa-B target genes. The polypeptide is Telomeric repeat-binding factor 2-interacting protein 1 (TERF2IP) (Homo sapiens (Human)).